Here is an 88-residue protein sequence, read N- to C-terminus: Putative membrane protein insertion efficiency factor (88 aa).

Belongs to the UPF0161 family.

It is found in the cell inner membrane. Functionally, could be involved in insertion of integral membrane proteins into the membrane. In Koribacter versatilis (strain Ellin345), this protein is Putative membrane protein insertion efficiency factor.